A 432-amino-acid chain; its full sequence is Adenylosuccinate synthetase (432 aa).

Residues Gly13 to Lys19 and Gly41 to Thr43 contribute to the GTP site. Asp14 acts as the Proton acceptor in catalysis. The Mg(2+) site is built by Asp14 and Gly41. IMP-binding positions include Asp14–Lys17, Asn39–His42, Thr130, Arg144, Gln225, Thr240, and Arg304. His42 serves as the catalytic Proton donor. Substrate is bound at residue Ala300 to Arg306. GTP contacts are provided by residues Arg306, Lys332–Asp334, and Ser415–Gly417.

This sequence belongs to the adenylosuccinate synthetase family. As to quaternary structure, homodimer. The cofactor is Mg(2+).

It localises to the cytoplasm. It carries out the reaction IMP + L-aspartate + GTP = N(6)-(1,2-dicarboxyethyl)-AMP + GDP + phosphate + 2 H(+). It participates in purine metabolism; AMP biosynthesis via de novo pathway; AMP from IMP: step 1/2. In terms of biological role, plays an important role in the de novo pathway of purine nucleotide biosynthesis. Catalyzes the first committed step in the biosynthesis of AMP from IMP. The chain is Adenylosuccinate synthetase from Tolumonas auensis (strain DSM 9187 / NBRC 110442 / TA 4).